The chain runs to 610 residues: ESX-5 secretion system protein EccA5 (610 aa).

Residue 357 to 364 (GPPGTGKT) participates in ATP binding.

It belongs to the CbxX/CfxQ family. As to quaternary structure, part of the ESX-5 / type VII secretion system (T7SS), which is composed of cytosolic and membrane components.

The protein resides in the cytoplasm. Part of an ESX-5 / type VII specialized secretion system (T7SS), which exports several proteins. EccA5 exhibits ATPase activity and may provide energy for the export of ESX-5 substrates. This chain is ESX-5 secretion system protein EccA5, found in Mycobacterium bovis (strain ATCC BAA-935 / AF2122/97).